Consider the following 187-residue polypeptide: Elongation factor P (187 aa).

It belongs to the elongation factor P family.

Its subcellular location is the cytoplasm. The protein operates within protein biosynthesis; polypeptide chain elongation. In terms of biological role, involved in peptide bond synthesis. Stimulates efficient translation and peptide-bond synthesis on native or reconstituted 70S ribosomes in vitro. Probably functions indirectly by altering the affinity of the ribosome for aminoacyl-tRNA, thus increasing their reactivity as acceptors for peptidyl transferase. This Azobacteroides pseudotrichonymphae genomovar. CFP2 protein is Elongation factor P.